Consider the following 1803-residue polypeptide: MEVHGDEVLSVDSGVSTPPSTGSGFRRPLETPGTEIGNLNLNPQNEVAVVGMACRLAGGNNSPEELWQSILNRKDASGEIPSMRWEPYYRRDIRNPKILDQTTKRGYFLDHVENFDAAFFGVSPKEAEQMDPQQRLSLEVTWEALEDAGIPPQSLSGSETAVFMGVNSDDYSKLLLEDIPNVEAWMGIGTAYCGVPNRISYHLNLMGPSTAVDAACASSLVAIHHGRQAILQGESEVAIVGGVNALCGPGLTRVLDKAGATSTEGRCLSFDEDAKGYGRGEGAAVVILKRLSTAIRDGDHIRAIIKGSAVAQDGKTNGIMAPNAKAQELVAWNALRTAGVDPLTVGYVEAHATSTPLGDPTEVSAVSAVYGKGRPEGNPCFIGSVKPNVGHLEAGAGAVGFIKAVMAVEKAIFPPQTNLKRLNSRIDWGQAGVKVVQETLEWPGNEDDVRRAGVCSYGYGGTVSHAIIEEFAQQLQRPTTNTTDEDPLPRILLLSAPQERRLALQARTQASWIAAEGRNRTLESIATTLSTRRGHHDYRAAIIAENHDDAVQKLSDIVNGKAAEWTTSSRVLDASCSKDVVWVFSGHGAQWTAMATDLLKDIVFYQTISRLDPIVEREMGFSALHSLASGDFESSIKVQVLTYLVQVGLAAILRSKGLEPQAVIGHSVGEIAASVAAGCLTAEEGALIVTRRANLYRRVMGAGAMVLVNIPFVDMEKELQGRTDLVAAIDSSPSSCVVSGATEAVLALVEDLKSRGVNAFRVKTDIPFHHPMLDQLSEPLREAMAGSLSPRKPRVRLYSTSAEDPRSMVARDIYYWTSNMVNPVRLTAAVQAAVDDGLRLFLEVSSHPIVSHSVRETMLDLGVEDFTVTNTMARNKPADKTILSSIAQLHCRGAVVNWKKQLPGPWALDVPLTTWDHKPYWRHIHTGPISASTLHDVDKHTLLGQRVPVAGETTMVFTTQMDDQTKPFPGSHPLHGSEIVPAAALVNTFLHATGATTLSNITLRVPVAISQPRDIQVVVSQNQIKICSRLTQKAGSGADEGSWLTHTTGQWEAGGSKNAPAQLDIAAIKARLANNKLADNFSIDYLDKVGVSAMGFPWAVTEHYGTLQEMIARVDVAPDVPATSPLPWDAASWAPILDAATSVGSTLFFDQPRLRMPAHIHGVQVYTTQPPLKVGYLYVEKAGDRDLAVHVSVCDELGTVLARFESMRFSEIEGTPGSNGSEESLVHQLAWPPAIYSEKPLTINNVVLVSRDKNVADLYCGSLKDRVSSITVLDAAADLLSLSQDSSSVLQAKDTAVVYVPGPLHSADSIPTAAHSFLMELLLLVKIIVNGSLPTKVFVLTDRVCESESATALAQSPIHGVSRIIAAEHPDQWGGLIDVETPGQFPLETMKYVQEADNIRISDGIPRIARLRPLPRDKLLPPSKQTSLLPRPESTYLITGGLGALGLEVAQFLVEKGARRLILVSRRALPPRREWADILADASSSLAPALETIQALEAQGATVHTLAVDISSPDAAPQLAVAIDSLSLPPVRGVVHAAGVLDSQLVLSATSDSVERVLAPKITGALVLGTVFPPKALDFFMLFSSCGQLLGFPGQASYASGNAFLDAFATSRRHQGDNAVAVQWTSWRSLGMAASTDFINAELASKGITDITRDEGFRAWMHISKYDIDQAAVLRSLAFEADEPLPTPILTDIAVRKAGSASSADAPSAAPKETNEMPESIPERRTWLDERIRDCVARVLQLGSSDEVDSKAALSDLGVDSVMTVSLRGQLQKTLGVKVPPTLTWSCPTVSHLVGWFLEKMGN.

The interval 1 to 40 (MEVHGDEVLSVDSGVSTPPSTGSGFRRPLETPGTEIGNLN) is disordered. A compositionally biased stretch (low complexity) spans 13 to 24 (SGVSTPPSTGSG). A Ketosynthase family 3 (KS3) domain is found at 44–470 (QNEVAVVGMA…GTVSHAIIEE (427 aa)). Catalysis depends on for beta-ketoacyl synthase activity residues Cys216, His351, and His391. The region spanning 581 to 894 (VWVFSGHGAQ…SIAQLHCRGA (314 aa)) is the Malonyl-CoA:ACP transacylase (MAT) domain. Catalysis depends on Ser667, which acts as the For malonyltransferase activity. Positions 940-1058 (HTLLGQRVPV…GQWEAGGSKN (119 aa)) are N-terminal hotdog fold. The 279-residue stretch at 940 to 1218 (HTLLGQRVPV…FSEIEGTPGS (279 aa)) folds into the PKS/mFAS DH domain. The active-site Proton acceptor; for thioesterase activity is His972. Residues 1073-1218 (ANNKLADNFS…FSEIEGTPGS (146 aa)) are C-terminal hotdog fold. Asp1129 functions as the Proton donor; for thioesterase activity in the catalytic mechanism. The interval 1141-1262 (TSVGSTLFFD…KNVADLYCGS (122 aa)) is required for homotetramer formation. A Ketoreductase (KR) domain is found at 1434 to 1628 (STYLITGGLG…AVAVQWTSWR (195 aa)). Residues 1701-1710 (ASSADAPSAA) are compositionally biased toward low complexity. The interval 1701–1721 (ASSADAPSAAPKETNEMPESI) is disordered. The Carrier domain occupies 1726–1801 (TWLDERIRDC…HLVGWFLEKM (76 aa)). At Ser1761 the chain carries O-(pantetheine 4'-phosphoryl)serine. The required for catalytic activity stretch occupies residues 1783 to 1803 (LTWSCPTVSHLVGWFLEKMGN).

As to quaternary structure, homotetramer.

It carries out the reaction 3 malonyl-CoA + acetyl-CoA + NADPH + 3 H(+) = 6-methylsalicylate + 3 CO2 + NADP(+) + 4 CoA + H2O. Its pathway is secondary metabolite biosynthesis. Its function is as follows. 6-methylsalicylic acid synthase; part of the gene cluster that mediates the biosynthesis of terreic acid, a quinone epoxide inhibitor of Bruton's tyrosine kinase. The first step of the pathway is the synthesis of 6-methylsalicylic acid (6-MSA) by the 6-methylsalicylic acid synthase atX. In the biosynthesis of 6-MSA, atX utilizes one acetyl-CoA and three malonyl-CoAs as its substrates and catalyzes a series of programmed reactions including Claisen condensation, reduction, aldol cyclization, and the hydrolytic cleavage that yields 6-MSA. The 6-methylsalicylate 1-monooxygenase atA then catalyzes the decarboxylative hydroxylation of 6-MSA to 3-methylcatechol. The next step is the conversion of 3-methylcatechol to 3-methyl-1,2,4-benzenetriol by cytochrome P450 monooxygenase atE, which is enhanced by cytochrome P450 monooxygenase atG. Then, the epoxidase atD catalyzes the epoxidation and hydroxyl oxidation of 3-methyl-1,2,4-benzenetriol to terremutin. Lastly, GMC oxidoreductase atC oxidizes terremutin to terreic acid. The sequence is that of 6-methylsalicylic acid synthase from Aspergillus terreus (strain NIH 2624 / FGSC A1156).